We begin with the raw amino-acid sequence, 486 residues long: UDP-N-acetylmuramate--L-alanine ligase (486 aa).

ATP is bound at residue 129–135; it reads GTHGKTT.

The protein belongs to the MurCDEF family.

Its subcellular location is the cytoplasm. It carries out the reaction UDP-N-acetyl-alpha-D-muramate + L-alanine + ATP = UDP-N-acetyl-alpha-D-muramoyl-L-alanine + ADP + phosphate + H(+). Its pathway is cell wall biogenesis; peptidoglycan biosynthesis. Functionally, cell wall formation. This chain is UDP-N-acetylmuramate--L-alanine ligase, found in Vibrio vulnificus (strain YJ016).